The following is a 1021-amino-acid chain: Ribosome quality control complex subunit 2 (1021 aa).

Residues 348 to 388 (IEAQKLKKRAHDRLATAERRLESAKEDQARKLQSLQDAQAT) are a coiled coil. The segment at 457 to 484 (NPESVDNSDESSETSDDDLDDSDDDNKV) is disordered. Acidic residues predominate over residues 462-480 (DNSDESSETSDDDLDDSDD). At serine 478 the chain carries Phosphoserine. 2 coiled-coil regions span residues 507-546 (NARK…DLKR) and 698-727 (DEKS…LKME). 2 stretches are compositionally biased toward polar residues: residues 746–761 (YNED…TTGS) and 839–856 (ISSQ…TPTA). Disordered stretches follow at residues 746–801 (YNED…TALE) and 832–905 (HAAR…VESF). Basic and acidic residues predominate over residues 876–905 (DQSRNSEAENEKGLSTEQRDEKKHAKVESF).

This sequence belongs to the NEMF family. Component of the ribosome quality control complex (RQC), composed of the E3 ubiquitin ligase rkr1/ltn1, rqc1 and mtr1/rqc2, as well as cdc48 and its ubiquitin-binding cofactors associated with the 60S ribosomal subunit. RQC2 binds to the 40S-binding surface of tRNAs.

Its subcellular location is the cytoplasm. In terms of biological role, key component of the ribosome quality control complex (RQC), a ribosome-associated complex that mediates the extraction of incompletely synthesized nascent chains from stalled ribosomes as well as their ubiquitin-mediated proteasomal degradation. Thereby, frees 60S subunit ribosomes from the stalled translation complex and prevents the accumulation of nascent polypeptide chains that are potentially toxic for the cell. Within the RQC complex, mtr1/rqc2 specifically binds stalled 60S ribosomal subunits by recognizing an exposed, nascent chain-conjugated tRNA moiety and promotes the recruitment of rkr1/ltn1 to stalled 60S subunits. Following binding to stalled 60S ribosomal subunits, mtr1/rqc2 mediates CAT tailing by recruiting alanine- and threonine-charged tRNA to the A-site and directing the elongation of stalled nascent chains independently of mRNA or 40S subunits, leading to non-templated C-terminal Ala and Thr extensions (CAT tails). CAT tails promote the rkr1/ltn1-mediated ubiquitination of incompletely synthesized nascent polypeptides: CAT tailing facilitates rkr1/ltn1-dependent ubiquitination by exposing lysine residues that would otherwise remain buried in the ribosomal exit tunnel. Following ubiquitination, incompletely synthesized nascent polypeptides are recognized by CDC48 and degraded by the proteasome. CAT-tailed proteins tend to aggregate and sequester chaperones and can induce proteotoxic stress; their rkr1/ltn1-dependent ubiquitination and degradation is required to prevent proteotoxic stress. This Schizosaccharomyces pombe (strain 972 / ATCC 24843) (Fission yeast) protein is Ribosome quality control complex subunit 2.